The sequence spans 416 residues: Serine hydroxymethyltransferase (416 aa).

Residues Leu121 and 125 to 127 (GHL) contribute to the (6S)-5,6,7,8-tetrahydrofolate site. Lys229 is subject to N6-(pyridoxal phosphate)lysine.

It belongs to the SHMT family. In terms of assembly, homodimer. Pyridoxal 5'-phosphate serves as cofactor.

The protein localises to the cytoplasm. The catalysed reaction is (6R)-5,10-methylene-5,6,7,8-tetrahydrofolate + glycine + H2O = (6S)-5,6,7,8-tetrahydrofolate + L-serine. It participates in one-carbon metabolism; tetrahydrofolate interconversion. The protein operates within amino-acid biosynthesis; glycine biosynthesis; glycine from L-serine: step 1/1. Catalyzes the reversible interconversion of serine and glycine with tetrahydrofolate (THF) serving as the one-carbon carrier. This reaction serves as the major source of one-carbon groups required for the biosynthesis of purines, thymidylate, methionine, and other important biomolecules. Also exhibits THF-independent aldolase activity toward beta-hydroxyamino acids, producing glycine and aldehydes, via a retro-aldol mechanism. In Neisseria gonorrhoeae (strain NCCP11945), this protein is Serine hydroxymethyltransferase.